Reading from the N-terminus, the 142-residue chain is Large ribosomal subunit protein uL11 (142 aa).

The protein belongs to the universal ribosomal protein uL11 family. Part of the ribosomal stalk of the 50S ribosomal subunit. Interacts with L10 and the large rRNA to form the base of the stalk. L10 forms an elongated spine to which L12 dimers bind in a sequential fashion forming a multimeric L10(L12)X complex. One or more lysine residues are methylated.

Functionally, forms part of the ribosomal stalk which helps the ribosome interact with GTP-bound translation factors. The sequence is that of Large ribosomal subunit protein uL11 from Hydrogenovibrio crunogenus (strain DSM 25203 / XCL-2) (Thiomicrospira crunogena).